The sequence spans 399 residues: uncharacterized protein (399 aa).

Positions 197–206 (ENSSASSVTS) are enriched in polar residues. Residues 197–224 (ENSSASSVTSEECEQDVMDEQSAEDNEE) form a disordered region. Residues 207-224 (EECEQDVMDEQSAEDNEE) are compositionally biased toward acidic residues.

This is an uncharacterized protein from Diadromus pulchellus (Parasitic wasp).